The sequence spans 218 residues: N-(5'-phosphoribosyl)anthranilate isomerase (218 aa).

This sequence belongs to the TrpF family.

It carries out the reaction N-(5-phospho-beta-D-ribosyl)anthranilate = 1-(2-carboxyphenylamino)-1-deoxy-D-ribulose 5-phosphate. It functions in the pathway amino-acid biosynthesis; L-tryptophan biosynthesis; L-tryptophan from chorismate: step 3/5. The chain is N-(5'-phosphoribosyl)anthranilate isomerase from Rhodopseudomonas palustris (strain BisB5).